A 287-amino-acid chain; its full sequence is Uricase (287 aa).

Active-site charge relay system residues include Lys11 and Thr58. Urate contacts are provided by Thr58, Asp59, Phe160, Arg177, Val219, Gln220, and Asn246. The active-site Charge relay system is His248. A Microbody targeting signal motif is present at residues 285 to 287 (SRL).

It belongs to the uricase family.

Its subcellular location is the peroxisome. The catalysed reaction is urate + O2 + H2O = 5-hydroxyisourate + H2O2. The protein operates within purine metabolism; urate degradation; (S)-allantoin from urate: step 1/3. Functionally, catalyzes the oxidation of uric acid to 5-hydroxyisourate, which is further processed to form (S)-allantoin. The protein is Uricase (uox) of Dictyostelium discoideum (Social amoeba).